The chain runs to 172 residues: Transmembrane protein 91 (172 aa).

Residues 1 to 97 lie on the Extracellular side of the membrane; it reads MDNSSIQELQ…SPLLPHDHLG (97 aa). Positions 60–86 are disordered; sequence GLGEPETPDFEDTLSSDSDSDDDGGDR. The segment covering 65 to 83 has biased composition (acidic residues); that stretch reads ETPDFEDTLSSDSDSDDDG. Residues 98–118 form a helical membrane-spanning segment; it reads LAVFSVLCCFWPVGIAAFCLA. The Cytoplasmic segment spans residues 119–139; sequence HKTNKAWAKGDVQGAGAASRR. Residues 140 to 160 traverse the membrane as a helical segment; sequence AFLLGVLAVGLGLCTYAAALV. Topologically, residues 161-172 are extracellular; that stretch reads TLAAYLASRDPP.

This sequence belongs to the CD225/Dispanin family.

The protein resides in the membrane. This chain is Transmembrane protein 91 (Tmem91), found in Mus musculus (Mouse).